A 393-amino-acid chain; its full sequence is MQFDNIDSALMALKNGEPIIVVDDENRENEGDLVAVTEWMNDNTINFMAKEARGLICAPVSKDIAQRLDLVQMVDDNSDIFGTQFTVSIDHVDTTTGISAYERTLTAKKLIDPSSEAKDFNRPGHLFPLVAQDKGVLARNGHTEAAVDLAKLTGAKPAGVICEIMNDDGTMAKGQDLQKFKEKHQLKMITIDDLIEYRKKLEPEIEFKAKVKMPTDFGTFDMYGFKATYTDEEIVVLTKGAIRQHENVRLHSACLTGDIFHSQRCDCGAQLESSMKYINEHGGMIIYLPQEGRGIGLLNKLRAYELIEQGYDTVTANLALGFDEDLRDYHIAAQILKYFNIEHINLLSNNPSKFEGLKQYGIDIAERIEVIVPETVHNHDYMETKKIKMGHLI.

The interval 1 to 200 (MQFDNIDSAL…IDDLIEYRKK (200 aa)) is DHBP synthase. D-ribulose 5-phosphate contacts are provided by residues 27–28 (RE), D32, 139–143 (RNGHT), and E163. E28 lines the Mg(2+) pocket. Mg(2+) is bound at residue H142. The tract at residues 201 to 393 (LEPEIEFKAK…TKKIKMGHLI (193 aa)) is GTP cyclohydrolase II. Residue 249–253 (RLHSA) coordinates GTP. Zn(2+) is bound by residues C254, C265, and C267. Residues Q270, 291 to 293 (EGR), and T313 contribute to the GTP site. D325 functions as the Proton acceptor; for GTP cyclohydrolase activity in the catalytic mechanism. The active-site Nucleophile; for GTP cyclohydrolase activity is the R327. 2 residues coordinate GTP: S348 and K353.

The protein in the N-terminal section; belongs to the DHBP synthase family. In the C-terminal section; belongs to the GTP cyclohydrolase II family. Requires Mg(2+) as cofactor. The cofactor is Mn(2+). Zn(2+) is required as a cofactor.

The enzyme catalyses D-ribulose 5-phosphate = (2S)-2-hydroxy-3-oxobutyl phosphate + formate + H(+). It carries out the reaction GTP + 4 H2O = 2,5-diamino-6-hydroxy-4-(5-phosphoribosylamino)-pyrimidine + formate + 2 phosphate + 3 H(+). It functions in the pathway cofactor biosynthesis; riboflavin biosynthesis; 2-hydroxy-3-oxobutyl phosphate from D-ribulose 5-phosphate: step 1/1. Its pathway is cofactor biosynthesis; riboflavin biosynthesis; 5-amino-6-(D-ribitylamino)uracil from GTP: step 1/4. Functionally, catalyzes the conversion of D-ribulose 5-phosphate to formate and 3,4-dihydroxy-2-butanone 4-phosphate. Its function is as follows. Catalyzes the conversion of GTP to 2,5-diamino-6-ribosylamino-4(3H)-pyrimidinone 5'-phosphate (DARP), formate and pyrophosphate. This Staphylococcus aureus (strain COL) protein is Riboflavin biosynthesis protein RibBA.